Reading from the N-terminus, the 153-residue chain is Antibacterial peptide PMAP-23 (153 aa).

An N-terminal signal peptide occupies residues 1–29 (METQRASLCLGRWSLWLLLLGLVVPSASA). Glutamine 30 carries the post-translational modification Pyrrolidone carboxylic acid. A propeptide spanning residues 30-130 (QALSYREAVL…DITCNQLQSV (101 aa)) is cleaved from the precursor. Positions 61–80 (DQPPKADEDPGTPKPVSFTV) are disordered. 2 disulfide bridges follow: cysteine 85–cysteine 96 and cysteine 107–cysteine 124.

Belongs to the cathelicidin family.

It localises to the secreted. In terms of biological role, exerts antimicrobial activity against both Gram-positive and negative bacteria at concentrations of 2-16 micro molar. Its activity appears to be mediated by its ability to damage bacterial membranes. This is Antibacterial peptide PMAP-23 (PMAP23) from Sus scrofa (Pig).